A 223-amino-acid chain; its full sequence is Small ribosomal subunit protein uS5 (223 aa).

Residues 1–15 (MTEAVAAEATETAPA) are compositionally biased toward low complexity. A disordered region spans residues 1-51 (MTEAVAAEATETAPATDDRRGGRRGERGDRGQGRGDRGGRGGRDGGREAEK). Residues 16-51 (TDDRRGGRRGERGDRGQGRGDRGGRGGRDGGREAEK) show a composition bias toward basic and acidic residues. The S5 DRBM domain maps to 54-117 (FVERVVTINR…EEAKKSFFRV (64 aa)).

This sequence belongs to the universal ribosomal protein uS5 family. Part of the 30S ribosomal subunit. Contacts proteins S4 and S8.

Its function is as follows. With S4 and S12 plays an important role in translational accuracy. Functionally, located at the back of the 30S subunit body where it stabilizes the conformation of the head with respect to the body. This is Small ribosomal subunit protein uS5 from Paenarthrobacter aurescens (strain TC1).